The chain runs to 291 residues: Glycine--tRNA ligase alpha subunit (291 aa).

Belongs to the class-II aminoacyl-tRNA synthetase family. Tetramer of two alpha and two beta subunits.

It localises to the cytoplasm. The catalysed reaction is tRNA(Gly) + glycine + ATP = glycyl-tRNA(Gly) + AMP + diphosphate. The protein is Glycine--tRNA ligase alpha subunit of Rhizorhabdus wittichii (strain DSM 6014 / CCUG 31198 / JCM 15750 / NBRC 105917 / EY 4224 / RW1) (Sphingomonas wittichii).